The chain runs to 250 residues: Triosephosphate isomerase (250 aa).

9–11 (NWK) serves as a coordination point for substrate. The active-site Electrophile is the histidine 95. Glutamate 167 acts as the Proton acceptor in catalysis. Residues glycine 173, serine 212, and 233–234 (GG) contribute to the substrate site.

This sequence belongs to the triosephosphate isomerase family. Homodimer.

It is found in the cytoplasm. The enzyme catalyses D-glyceraldehyde 3-phosphate = dihydroxyacetone phosphate. It functions in the pathway carbohydrate biosynthesis; gluconeogenesis. Its pathway is carbohydrate degradation; glycolysis; D-glyceraldehyde 3-phosphate from glycerone phosphate: step 1/1. Functionally, involved in the gluconeogenesis. Catalyzes stereospecifically the conversion of dihydroxyacetone phosphate (DHAP) to D-glyceraldehyde-3-phosphate (G3P). The polypeptide is Triosephosphate isomerase (Endomicrobium trichonymphae).